The sequence spans 196 residues: Small ribosomal subunit protein uS4c (196 aa).

A disordered region spans residues 16–40 (GALPGLTRKTPKSGSNLKKKFHSGK). One can recognise an S4 RNA-binding domain in the interval 89–152 (MRLDNTLFRL…RSKDLVRNSI (64 aa)).

Belongs to the universal ribosomal protein uS4 family. In terms of assembly, part of the 30S ribosomal subunit. Contacts protein S5. The interaction surface between S4 and S5 is involved in control of translational fidelity.

It is found in the plastid. Its subcellular location is the chloroplast. Functionally, one of the primary rRNA binding proteins, it binds directly to 16S rRNA where it nucleates assembly of the body of the 30S subunit. Its function is as follows. With S5 and S12 plays an important role in translational accuracy. This is Small ribosomal subunit protein uS4c (rps4) from Anthoxanthum odoratum (Sweet vernal grass).